Consider the following 2332-residue polypeptide: MNTTNCFIALVYLIREIKTLFRSRTKGKMEFTLHNGEKKTFYSRPNNHDNCWLNTILQLFRYVDEPFFDWVYNSPENLTLDAIKQLENFTGLELHEGGPPALVIWNIKHLLQTGIGTASRPSEVCMVDGTDMCLADFHAGIFMKGQEHAVFACVTSDGWYAIDDEDFYPWTPDPSDVLVFVPYDQEPLNGDWKTQVQKKLKGAGQSSPATGSQNQSGNTGSIINNYYMQQYQNSMSTQLGDNTISGGSNEGSTDTTSTHTTNTQNNDWFSKLASSAFTGLFGALLADKKTEETTLLEDRILTTRNGHTTSTTQSSVGVTYGYSTEEDHVAGPNTSGLETRVVQAERFFKKFLFDWTTDKPFGYLTKLELPTDHHGVFGHLVDSYAYMRNGWDVEVSAVGNQFNGGCLLVAMVPEWKAFDTREKYQLTLFPHQFISPRTNMTAHITVPYLGVNRYDQYKKHKPWTLVVMVLSPLTVSNTAAPQIKVYANIAPTYVHVAGELPSKEGIFPVACADGYGGLVTTDPKTADPVYGKVYNPPKTNYPGRFTNLLDVAEACPTFLRFDDGKPYVVTRADDTRLLAKFDVSLAAKHMSNTYLSGIAQYYTQYSGTINLHFMFTGSTDSKARYMVAYIPPGVETPPDTPEEAAHCIHAEWDTGLNSKFTFSIPYVSAADYAYTASDTAETTNVQGWVCVYQITHGKAENDTLLVSASAGKDFELRLPIDPRTQTTTTGESADPVTTTVENYGGDTQVQRRHHTDVGFIMDRFVKINSLSPTHVIDLMQTHKHGIVGALLRAATYYFSDLEIVVRHDGNLTWVPNGAPEAALSNTSNPTAYNKAPFTRLALPYTAPHRVLATVYDGTNKYSASDSRSGDLGSIAARVATQLPASFNYGAIQAQAIHELLVRMKRAELYCPRPLLAIKVTSQDRYKQKIIAPAKQLLNFDLLKLAGDVESNLGPFFFADVRSNFSKLVDTINQMQEDMSTKHGPDFNRLVSAFEELATGVKAIRTGLDEAKPWYKLIKLLSRLSCMAAVAARSKDPVLVAIMLADTGLEILDSTFVVKKSSDSLSSLFHVPAPAFSFGAPVLLAGLVKVASSFFRSTPEDLERAEKQLKARDINDIFAILKNGEWLVKLILAIRDWIKAWIASEEKFVTMTDLVPGILEKQRDLNDPGKYKEAKEWLDNARQACLKSGNVHIANLCKVVAPAPSKSRPEPVVVCLRGKSGQGKSFLANVLAQAISTHFTGRIDSVWYCPPDPDHFDGYNQQTVVVMDDLGQNPDGKDFKYFAQMVSTTGFIPPMASLEDKGKPFNSKVIIATTNLYSGFTPRTMVCPDALNRRFHFDIDVSAKDGYKINNKLDIIKALEDTHTNPVAMFQYDCALLNGMAVEMKRLQQDMFKPQPPLQNVYQLVQEVIERVELHEKVSSHPIFKQISIPSQKSVLYFLIEKGQHEAAIEFFEGMVHDSVKEELRPLIQQTSFVKRAFKRLKENFEIVALCLTLLANIVIMIRETRKRQKMVDDAVNEYIERANITTDDKTLDEAEKNPLETSGASTVGFRERSLTGQKVRDDVSSEPAQPAEDQPQAEGPYSGPLERQKPLKVRAKLPQQEGPYAGPMERQKPLKVKVKAPVVKEGPYEGPVKKPVALKVKARNLIVTESGAPPTDLQKMVMGNTKPVELNLDGKTVAICCATGVFGTAYLVPRHLFAEKYDKIMLDGRAMTDSDYRVFEFEIKVKGQDMLSDAALIVLHRGNCVRDITKHFRDTARMKKGTPVVGVVNNADVGRLIFSGEALTYKDIVVCMDGDTMPGLFAYKAATRAGYCGGAVLAKDGADTFIVGTHSAGGNGVGYCSCVSRSMLQKMKAHVDPEPHHEGLIVDTRDVEERVHVMRKTKLAPTVAYGVFNPEFGPAALSNKDPRLNEGVVLDDVIFSKHKGDAKMTEEDKALFRRCAADYASRLHSVLGTANAPLSIYEAIKGVDGLDAMEPDTAPGLPWALQGKRRGALIDFENGTVGPEVEAALKLMEKREYKFACQTFLKDEIRPMEKVRAGKTRIVDVLPVEHILYTKMMIGRFCAQMHSNNGPQIGSAVGCNPDVDWQRFGTHFAQYRNVWDVDYSAFDANHCSDAMNIMFEEVFRTDFGFHPNAEWILKTLVNTEHAYENKRITVEGGMPSGCSATSIINTILNNIYVLYALRRHYEGVELDTYTMISYGDDIVVASDYDLDFEALKPHFKSLGQTITPADKSDKGFVLGQSITDVTFLKRHFHMDYGTGFYKPVMASKTLEAILSFARRGTIQEKLISVAGLAVHSGPDEYRRLFEPFQGLFEIPSYRSLYLRWVNAVCGDA.

The Peptidase C28 domain occupies 1 to 201 (MNTTNCFIAL…WKTQVQKKLK (201 aa)). The Cytoplasmic portion of the chain corresponds to 1 to 1480 (MNTTNCFIAL…SFVKRAFKRL (1480 aa)). Residues cysteine 51, histidine 148, and aspartate 163 each act as for leader protease activity in the active site. Disordered regions lie at residues 199–218 (KLKGAGQSSPATGSQNQSGN) and 237–264 (TQLGDNTISGGSNEGSTDTTSTHTTNTQ). Glycine 202 is lipidated: N-myristoyl glycine; by host. 2 stretches are compositionally biased toward polar residues: residues 204–218 (GQSSPATGSQNQSGN) and 237–251 (TQLGDNTISGGSNEG). Over residues 252–264 (STDTTSTHTTNTQ) the composition is skewed to low complexity. The antigenic epitope stretch occupies residues 789 to 797 (ALLRAATYY). Residues 867-870 (RSGD) carry the Cell attachment site motif. The 165-residue stretch at 1189-1353 (NVHIANLCKV…DGYKINNKLD (165 aa)) folds into the SF3 helicase domain. Residue 1217-1224 (GKSGQGKS) coordinates ATP. Residues 1481-1501 (KENFEIVALCLTLLANIVIMI) lie within the membrane without spanning it. Topologically, residues 1502 to 2332 (RETRKRQKMV…RWVNAVCGDA (831 aa)) are cytoplasmic. Composition is skewed to basic and acidic residues over residues 1529 to 1538 (KTLDEAEKNP) and 1549 to 1563 (FRERSLTGQKVRDDV). The disordered stretch occupies residues 1529 to 1588 (KTLDEAEKNPLETSGASTVGFRERSLTGQKVRDDVSSEPAQPAEDQPQAEGPYSGPLERQ). Residues tyrosine 1581, tyrosine 1604, and tyrosine 1628 each carry the O-(5'-phospho-RNA)-tyrosine modification. A Peptidase C3 domain is found at 1652-1848 (APPTDLQKMV…YCSCVSRSML (197 aa)). Catalysis depends on histidine 1695, which acts as the For protease 3C activity; Proton donor/acceptor. Active-site for protease 3C activity residues include aspartate 1733 and cysteine 1812. A Nuclear localization signal motif is present at residues 1878–1886 (MRKTKLAPT). In terms of domain architecture, RdRp catalytic spans 2096 to 2214 (RNVWDVDYSA…ASDYDLDFEA (119 aa)). The For RdRp activity role is filled by aspartate 2200.

This sequence belongs to the picornaviruses polyprotein family. In terms of assembly, interacts with host ISG15. As to quaternary structure, interacts (via R-G-D motif) with host ITGAV/ITGB6. Interacts with host MAVS; this interaction inhibits binding of host TRAF3 to MAVS, thereby suppressing interferon-mediated responses. Forms homooligomers. In terms of assembly, homohexamer. Interacts with host VIM. Interacts with host BECN1. As to quaternary structure, interacts with host DCTN3. Interacts with RNA-dependent RNA polymerase; this interaction allows 3B-1 to binds 2 polymerases and act as a primer. It also allows the recruitment of the RNA-dependent RNA polymerase to host membranes. In terms of assembly, interacts with RNA-dependent RNA polymerase; this interaction allows 3B-2 to act as a primer. As to quaternary structure, interacts with RNA-dependent RNA polymerase; this interaction allows 3B-3 to act as a primer. Interacts with 3B-1; this interaction allows 3B-1 to binds 2 polymerases and act as a primer. It also allows the recruitment of the RNA-dependent RNA polymerase to host membranes. Interacts with 3B-2; this interaction allows 3B-2 to act as a primer. Interacts with 3B-3; this interaction allows 3B-3 to act as a primer. In terms of processing, removes six residues from its own C-terminus, generating sLb(pro). Specific enzymatic cleavages in vivo by the viral proteases yield a variety of precursors and mature proteins. The polyprotein seems to be cotranslationally cleaved at the 2A/2B junction by a ribosomal skip from one codon to the next without formation of a peptide bond. This process would release the L-P1-2A peptide from the translational complex. Post-translationally, during virion maturation, immature virions are rendered infectious following cleavage of VP0 into VP4 and VP2. This maturation seems to be an autocatalytic event triggered by the presence of RNA in the capsid and is followed by a conformational change of the particle. In terms of processing, myristoylation is required during RNA encapsidation and formation of the mature virus particle. Uridylylated by the polymerase and covalently linked to the 5'-end of genomic RNA. These uridylylated forms act as a nucleotide-peptide primer for the polymerase.

Its subcellular location is the host nucleus. The protein resides in the host cytoplasm. It is found in the virion. The protein localises to the host endoplasmic reticulum membrane. It localises to the host cytoplasmic vesicle membrane. The catalysed reaction is Autocatalytically cleaves itself from the polyprotein of the foot-and-mouth disease virus by hydrolysis of a Lys-|-Gly bond, but then cleaves host cell initiation factor eIF-4G at bonds -Gly-|-Arg- and -Lys-|-Arg-.. It carries out the reaction a ribonucleoside 5'-triphosphate + H2O = a ribonucleoside 5'-diphosphate + phosphate + H(+). The enzyme catalyses RNA(n) + a ribonucleoside 5'-triphosphate = RNA(n+1) + diphosphate. It catalyses the reaction Selective cleavage of Gln-|-Gly bond in the poliovirus polyprotein. In other picornavirus reactions Glu may be substituted for Gln, and Ser or Thr for Gly.. Its function is as follows. Autocatalytically cleaves itself from the polyprotein at the L/VP0 junction. Also cleaves the host translation initiation factors EIF4G1 and EIF4G3, in order to shut off the capped cellular mRNA transcription. Plays a role in counteracting host innate antiviral response using diverse mechanisms. Possesses a deubiquitinase activity acting on both 'Lys-48' and 'Lys-63'-linked polyubiquitin chains. In turn, inhibits the ubiquitination and subsequent activation of key signaling molecules of type I IFN response such as host RIGI, TBK1, TRAF3 and TRAF6. Inhibits host NF-kappa-B activity by inducing a decrease in RELA mRNA levels. Cleaves a peptide bond in the C-terminus of host ISG15, resulting in the damaging of this modifier that can no longer be attached to target proteins. Also cleaves host G3BP1 and G3BP2 in order to inhibit cytoplasmic stress granules assembly. Lies on the inner surface of the capsid shell. After binding to the host receptor, the capsid undergoes conformational changes. Capsid protein VP4 is released, capsid protein VP1 N-terminus is externalized, and together, they shape a pore in the host membrane through which the viral genome is translocated into the host cell cytoplasm. After genome has been released, the channel shrinks. In terms of biological role, forms an icosahedral capsid of pseudo T=3 symmetry with capsid proteins VP1 and VP3. The capsid is composed of 60 copies of each capsid protein organized in the form of twelve pentamers and encloses the viral positive strand RNA genome. Upon acidifcation in the endosome, dissociates into pentamers. Functionally, forms an icosahedral capsid of pseudo T=3 symmetry with capsid proteins VP2 and VP3. The capsid is composed of 60 copies of each capsid protein organized in the form of twelve pentamers and encloses the viral positive strand RNA genome. Mediates cell entry by attachment to an integrin receptor, usually host ITGAV/ITGB6. In addition, targets host MAVS to suppress type I IFN pathway. Upon acidifcation in the endosome, dissociates into pentamers. Its function is as follows. Forms an icosahedral capsid of pseudo T=3 symmetry with capsid proteins VP0 and VP3. The capsid is composed of 60 copies of each capsid protein organized in the form of twelve pentamers and encloses the viral positive strand RNA genome. Mediates self-processing of the polyprotein by a translational effect termed 'ribosome skipping'. Mechanistically, 2A-mediated cleavage occurs between the C-terminal glycine and the proline of the downstream protein 2B. In the case of foot-and-mouth disease virus, the 2A oligopeptide is post-translationally 'trimmed' from the C-terminus of the upstream protein 1D by 3C proteinase. In terms of biological role, plays an essential role in the virus replication cycle by acting as a viroporin. Creates a pore in the host endoplasmic reticulum and as a consequence releases Ca2+ in the cytoplasm of infected cell. In turn, high levels of cytoplasmic calcium may trigger membrane trafficking and transport of viral ER-associated proteins to viroplasms, sites of viral genome replication. Functionally, associates with and induces structural rearrangements of intracellular membranes. Triggers host autophagy by interacting with host BECN1 and thereby promotes viral replication. Participates in viral replication and interacts with host DHX9. Displays RNA-binding, nucleotide binding and NTPase activities. May play a role in virion morphogenesis and viral RNA encapsidation by interacting with the capsid protein VP3. Its function is as follows. Plays important roles in virus replication, virulence and host range. Cooperates with host DDX56 to inhibit IRF3 nuclear translocation and subsequent type I interferon production. Covalently linked to the 5'-end of both the positive-strand and negative-strand genomic RNAs. Acts as a genome-linked replication primer. In terms of biological role, covalently linked to the 5'-end0 of both the positive-strand and negative-strand genomic RNAs. Acts as a genome-linked replication primer. Functionally, cysteine protease that generates mature viral proteins from the precursor polyprotein. In addition to its proteolytic activity, binds to viral RNA and thus influences viral genome replication. RNA and substrate bind cooperatively to the protease. Its function is as follows. RNA-directed RNA polymerase 3D-POL replicates genomic and antigenomic RNA by recognizing replications specific signals. Covalently attaches UMP to a tyrosine of VPg, which is used to prime RNA synthesis. The positive stranded RNA genome is first replicated at virus induced membranous vesicles, creating a dsRNA genomic replication form. This dsRNA is then used as template to synthesize positive stranded RNA genomes. ss(+)RNA genomes are either translated, replicated or encapsidated. This Bos taurus (Bovine) protein is Genome polyprotein.